A 270-amino-acid chain; its full sequence is Putative carbamate hydrolase RutD (270 aa).

Belongs to the AB hydrolase superfamily. Hydrolase RutD family.

The enzyme catalyses carbamate + 2 H(+) = NH4(+) + CO2. Functionally, involved in pyrimidine catabolism. May facilitate the hydrolysis of carbamate, a reaction that can also occur spontaneously. In Escherichia coli O44:H18 (strain 042 / EAEC), this protein is Putative carbamate hydrolase RutD.